A 463-amino-acid polypeptide reads, in one-letter code: Flotillin-like protein 2 (463 aa).

Cys-35 carries S-palmitoyl cysteine lipidation. Positions 305 to 354 form a coiled coil; sequence EYETKVQEANWELYNKQKQAEAVLYEKQKQAEAQKAEADATFYSKQKEAE.

It belongs to the band 7/mec-2 family. Flotillin subfamily. In terms of processing, may be palmitoylated.

The protein resides in the cell membrane. Its subcellular location is the membrane. The protein localises to the caveola. In terms of biological role, may act as a scaffolding protein within caveolar membranes, functionally participating in formation of caveolae or caveolae-like vesicles. This is Flotillin-like protein 2 (FLOT2) from Arabidopsis thaliana (Mouse-ear cress).